A 469-amino-acid chain; its full sequence is uncharacterized protein (469 aa).

Disordered regions lie at residues 248 to 314 and 327 to 418; these read RDDN…EPES and QMDQ…PRPT. 2 stretches are compositionally biased toward polar residues: residues 292 to 305 and 350 to 365; these read ESSN…NAAS and TARQ…PNTV. The segment covering 366–377 has biased composition (low complexity); the sequence is TATSASTPASTS.

This is an uncharacterized protein from Cryphonectria parasitica (Chestnut blight fungus).